Reading from the N-terminus, the 378-residue chain is GDP-mannose 3,5-epimerase 1 (378 aa).

NAD(+) contacts are provided by residues 36-62 (GAGG…SDWK), D60, and D80. Substrate is bound by residues G105 and 145 to 147 (SAC). Y175 and K179 together coordinate NAD(+). The active-site Proton acceptor is Y175. Substrate contacts are provided by residues N204, 217–219 (EKA), K226, 242–244 (QTR), R307, and S357.

This sequence belongs to the NAD(P)-dependent epimerase/dehydratase family. Homodimer. NAD(+) serves as cofactor.

It carries out the reaction GDP-alpha-D-mannose = GDP-beta-L-gulose. It catalyses the reaction GDP-beta-L-gulose = GDP-beta-L-galactose. It functions in the pathway cofactor biosynthesis; L-ascorbate biosynthesis via GDP-alpha-D-mannose pathway; L-ascorbate from GDP-alpha-D-mannose: step 1/5. In terms of biological role, catalyzes a reversible epimerization of GDP-D-mannose that precedes the committed step in the biosynthesis of vitamin C (L-ascorbate), resulting in the hydrolysis of the highly energetic glycosyl-pyrophosphoryl linkage. Able to catalyze 2 distinct epimerization reactions and can release both GDP-L-galactose and GDP-L-gulose from GDP-mannose. The chain is GDP-mannose 3,5-epimerase 1 from Oryza sativa subsp. indica (Rice).